Here is a 161-residue protein sequence, read N- to C-terminus: Small ribosomal subunit protein uS19 (161 aa).

Positions Met-1–Gln-19 are enriched in basic residues. Residues Met-1–Arg-26 are disordered.

Belongs to the universal ribosomal protein uS19 family.

Functionally, protein S19 forms a complex with S13 that binds strongly to the 16S ribosomal RNA. This Methanococcus maripaludis (strain DSM 14266 / JCM 13030 / NBRC 101832 / S2 / LL) protein is Small ribosomal subunit protein uS19.